The primary structure comprises 622 residues: Pyranose 2-oxidase (622 aa).

The N-terminal stretch at 1 to 28 (MSASSSDPFHSFAKTSFTSKAAKRATAH) is a signal peptide. The propeptide occupies 29 to 37 (SLPPLPGPG). His167 is subject to Tele-8alpha-FAD histidine. 2 residues coordinate substrate: Gln449 and His451. His546 (proton acceptor) is an active-site residue. Asn591 is a catalytic residue.

This sequence belongs to the GMC oxidoreductase family. Homotetramer. The cofactor is FAD. Post-translationally, not glycosylated.

It is found in the periplasm. The catalysed reaction is D-glucose + O2 = 2-dehydro-D-glucose + H2O2. In terms of biological role, catalyzes the oxidation of various aldopyranoses and disaccharides on carbon-2 to the corresponding 2-keto sugars concomitant with the reduction of O(2) to H(2)O(2). Plays an important role in lignin degradation of wood rot fungi by supplying the essential cosubstrate H(2)O(2) for the ligninolytic peroxidases, lignin peroxidase and manganese-dependent peroxidase. The preferred substrate is D-glucose which is converted to 2-dehydro-D-glucose, an intermediate of a secondary metabolic pathway leading to the antibiotic cortalcerone. Also acts on D-xylose, together with D-glucose the major sugars derived from wood, on L-sorbose, D-galactose and 1,5-anhydroglucitol, a diagnostic marker of diabetes mellitus. The chain is Pyranose 2-oxidase (p2ox) from Phlebiopsis gigantea (White-rot fungus).